Consider the following 607-residue polypeptide: UvrABC system protein C (607 aa).

Residues 12-91 enclose the GIY-YIG domain; it reads DSPGVYLYKD…IKRYRPRYNI (80 aa). The 36-residue stretch at 200-235 folds into the UVR domain; it reads ENLIKKLKKEMAIASDNLEFERAAKLRDQILALEKI.

It belongs to the UvrC family. Interacts with UvrB in an incision complex.

It localises to the cytoplasm. The UvrABC repair system catalyzes the recognition and processing of DNA lesions. UvrC both incises the 5' and 3' sides of the lesion. The N-terminal half is responsible for the 3' incision and the C-terminal half is responsible for the 5' incision. This Carboxydothermus hydrogenoformans (strain ATCC BAA-161 / DSM 6008 / Z-2901) protein is UvrABC system protein C.